The primary structure comprises 467 residues: tRNA modification GTPase MnmE (467 aa).

(6S)-5-formyl-5,6,7,8-tetrahydrofolate-binding residues include arginine 25, glutamate 87, and lysine 130. A TrmE-type G domain is found at 226–389 (GLSVVLAGQP…LRGELLRIAG (164 aa)). Position 236 (asparagine 236) interacts with K(+). GTP-binding positions include 236 to 241 (NVGKSS), 255 to 261 (TPIAGTT), and 280 to 283 (DTAG). Serine 240 contributes to the Mg(2+) binding site. Residues threonine 255, isoleucine 257, and threonine 260 each contribute to the K(+) site. Residue threonine 261 participates in Mg(2+) binding. Lysine 467 lines the (6S)-5-formyl-5,6,7,8-tetrahydrofolate pocket.

Belongs to the TRAFAC class TrmE-Era-EngA-EngB-Septin-like GTPase superfamily. TrmE GTPase family. As to quaternary structure, homodimer. Heterotetramer of two MnmE and two MnmG subunits. Requires K(+) as cofactor.

The protein resides in the cytoplasm. Functionally, exhibits a very high intrinsic GTPase hydrolysis rate. Involved in the addition of a carboxymethylaminomethyl (cmnm) group at the wobble position (U34) of certain tRNAs, forming tRNA-cmnm(5)s(2)U34. This Burkholderia thailandensis (strain ATCC 700388 / DSM 13276 / CCUG 48851 / CIP 106301 / E264) protein is tRNA modification GTPase MnmE.